Here is a 197-residue protein sequence, read N- to C-terminus: MNYSKAKYIMGAAKVSQLPEDTGVEVAFAGRSNAGKSSALNTLTDQKGLARVSKTPGRTQLINLFDLGNNNRLVDLPGYGYAKVSESIKRQWQSEMENYLTSRKCLNGIVLLVDLRHELKEFDSLMIEMAISFDLNLHILLTKADKLNNKERAQANRMIESFLKTFVSTDKISYQLFSSLTKMGLDKFKEKLDTWYQ.

The 176-residue stretch at 22-197 (TGVEVAFAGR…FKEKLDTWYQ (176 aa)) folds into the EngB-type G domain. GTP contacts are provided by residues 30 to 37 (GRSNAGKS), 57 to 61 (GRTQL), 75 to 78 (DLPG), 142 to 145 (TKAD), and 177 to 179 (FSS). Mg(2+) is bound by residues Ser37 and Thr59.

It belongs to the TRAFAC class TrmE-Era-EngA-EngB-Septin-like GTPase superfamily. EngB GTPase family. Mg(2+) is required as a cofactor.

Necessary for normal cell division and for the maintenance of normal septation. The sequence is that of Probable GTP-binding protein EngB from Francisella tularensis subsp. tularensis (strain FSC 198).